Reading from the N-terminus, the 65-residue chain is Alpha-toxin Bot11 (65 aa).

Residues 2-64 form the LCN-type CS-alpha/beta domain; that stretch reads KDGYIVDDRN…VRTVQAGRCR (63 aa). Disulfide bonds link Cys12–Cys63, Cys16–Cys36, Cys22–Cys46, and Cys26–Cys48.

The protein belongs to the long (4 C-C) scorpion toxin superfamily. Sodium channel inhibitor family. Alpha subfamily. Expressed by the venom gland.

The protein resides in the secreted. Its function is as follows. Alpha toxins bind voltage-independently at site-3 of sodium channels (Nav) and inhibit the inactivation of the activated channels, thereby blocking neuronal transmission. In Buthus occitanus tunetanus (Common European scorpion), this protein is Alpha-toxin Bot11.